Here is a 121-residue protein sequence, read N- to C-terminus: MEKALSLEELLAEYREETEEIVEAILEDGSNPDAVYMIEHHLSCTDFDVLEKAAIACFKKGYEVTDPEECELEDGSIILSFDVTVEMNLDEEAIMEDIEKLVVLAQSFSIDYDGWGTYPEE.

This sequence belongs to the RraB family. In terms of assembly, interacts with the C-terminal region of Rne.

The protein localises to the cytoplasm. Its function is as follows. Globally modulates RNA abundance by binding to RNase E (Rne) and regulating its endonucleolytic activity. Can modulate Rne action in a substrate-dependent manner by altering the composition of the degradosome. The polypeptide is Regulator of ribonuclease activity B (Psychromonas ingrahamii (strain DSM 17664 / CCUG 51855 / 37)).